We begin with the raw amino-acid sequence, 335 residues long: Phosphate acyltransferase (335 aa).

Belongs to the PlsX family. Homodimer. Probably interacts with PlsY.

It localises to the cytoplasm. It carries out the reaction a fatty acyl-[ACP] + phosphate = an acyl phosphate + holo-[ACP]. Its pathway is lipid metabolism; phospholipid metabolism. Functionally, catalyzes the reversible formation of acyl-phosphate (acyl-PO(4)) from acyl-[acyl-carrier-protein] (acyl-ACP). This enzyme utilizes acyl-ACP as fatty acyl donor, but not acyl-CoA. The protein is Phosphate acyltransferase of Brevibacillus brevis (strain 47 / JCM 6285 / NBRC 100599).